The primary structure comprises 377 residues: Queuine tRNA-ribosyltransferase (377 aa).

Asp-92 acts as the Proton acceptor in catalysis. Residues 92–96, Asp-146, Gln-190, and Gly-217 contribute to the substrate site; that span reads DSGGF. Residues 248–254 are RNA binding; sequence GVGRPED. Asp-267 (nucleophile) is an active-site residue. The segment at 272 to 276 is RNA binding; important for wobble base 34 recognition; sequence TRHAR. Zn(2+) is bound by residues Cys-305, Cys-307, Cys-310, and His-337.

Belongs to the queuine tRNA-ribosyltransferase family. As to quaternary structure, homodimer. Within each dimer, one monomer is responsible for RNA recognition and catalysis, while the other monomer binds to the replacement base PreQ1. The cofactor is Zn(2+).

It catalyses the reaction 7-aminomethyl-7-carbaguanine + guanosine(34) in tRNA = 7-aminomethyl-7-carbaguanosine(34) in tRNA + guanine. Its pathway is tRNA modification; tRNA-queuosine biosynthesis. Catalyzes the base-exchange of a guanine (G) residue with the queuine precursor 7-aminomethyl-7-deazaguanine (PreQ1) at position 34 (anticodon wobble position) in tRNAs with GU(N) anticodons (tRNA-Asp, -Asn, -His and -Tyr). Catalysis occurs through a double-displacement mechanism. The nucleophile active site attacks the C1' of nucleotide 34 to detach the guanine base from the RNA, forming a covalent enzyme-RNA intermediate. The proton acceptor active site deprotonates the incoming PreQ1, allowing a nucleophilic attack on the C1' of the ribose to form the product. After dissociation, two additional enzymatic reactions on the tRNA convert PreQ1 to queuine (Q), resulting in the hypermodified nucleoside queuosine (7-(((4,5-cis-dihydroxy-2-cyclopenten-1-yl)amino)methyl)-7-deazaguanosine). This is Queuine tRNA-ribosyltransferase from Xylella fastidiosa (strain Temecula1 / ATCC 700964).